Reading from the N-terminus, the 659-residue chain is RNA-binding E3 ubiquitin-protein ligase MEX3C (659 aa).

Over residues 1 to 15 (MPSGSSAALALAAAP) the composition is skewed to low complexity. Positions 1-140 (MPSGSSAALA…EEAEEEDRSS (140 aa)) are disordered. Pro residues predominate over residues 16-37 (APLPQPPPPPPPPPPPLPPPSG). Over residues 64 to 82 (EPGAPALRAPAAAAQGQAR) the composition is skewed to low complexity. The span at 83 to 94 (RAAELSPEERAP) shows a compositional bias: basic and acidic residues. S88 carries the phosphoserine modification. Over residues 104 to 137 (AELELEEDEEEGEEAELDGDLLEEEELEEAEEED) the composition is skewed to acidic residues. KH domains are found at residues 232–293 (TTEC…KREI) and 326–387 (QTTV…REEI). The interval 513–569 (FEPVNPLSGFGSDPSGNMKTQRRGSQPSTPRLSPTFPESIEHPLARRVRSDPPSTGN) is disordered. Residues 526 to 544 (PSGNMKTQRRGSQPSTPRL) are compositionally biased toward polar residues. Phosphoserine is present on residues S537 and S545. Basic and acidic residues predominate over residues 551 to 562 (SIEHPLARRVRS). The segment at 608–648 (CVICFENEVIAALVPCGHNLFCMECANKICEKRTPSCPVCQ) adopts an RING-type zinc-finger fold.

Interacts with USP7, which antagonizes the ability to degrade mRNA. Highest levels found in fetal brain and testis. Also expressed in thymus, salivary gland and uterus. Highly expressed in cells of the innate immune system, in particular activated NK cells. Week expression in the intestine.

The protein resides in the cytoplasm. The protein localises to the nucleus. It carries out the reaction S-ubiquitinyl-[E2 ubiquitin-conjugating enzyme]-L-cysteine + [acceptor protein]-L-lysine = [E2 ubiquitin-conjugating enzyme]-L-cysteine + N(6)-ubiquitinyl-[acceptor protein]-L-lysine.. Functionally, E3 ubiquitin ligase responsible for the post-transcriptional regulation of common HLA-A allotypes. Binds to the 3' UTR of HLA-A2 mRNA, and regulates its levels by promoting mRNA decay. RNA binding is sufficient to prevent translation, but ubiquitin ligase activity is required for mRNA degradation. In Homo sapiens (Human), this protein is RNA-binding E3 ubiquitin-protein ligase MEX3C (MEX3C).